The sequence spans 179 residues: Large ribosomal subunit protein uL5 (179 aa).

This sequence belongs to the universal ribosomal protein uL5 family. In terms of assembly, part of the 50S ribosomal subunit; part of the 5S rRNA/L5/L18/L25 subcomplex. Contacts the 5S rRNA and the P site tRNA. Forms a bridge to the 30S subunit in the 70S ribosome.

In terms of biological role, this is one of the proteins that bind and probably mediate the attachment of the 5S RNA into the large ribosomal subunit, where it forms part of the central protuberance. In the 70S ribosome it contacts protein S13 of the 30S subunit (bridge B1b), connecting the 2 subunits; this bridge is implicated in subunit movement. Contacts the P site tRNA; the 5S rRNA and some of its associated proteins might help stabilize positioning of ribosome-bound tRNAs. The sequence is that of Large ribosomal subunit protein uL5 from Synechococcus sp. (strain CC9605).